The following is a 1158-amino-acid chain: ATP-dependent helicase/deoxyribonuclease subunit B (1158 aa).

The 275-residue stretch at 1–275 (MTLHAYLGRA…QYFNQLYRFN (275 aa)) folds into the UvrD-like helicase ATP-binding domain. Residue 8-15 (GRAGTGKS) coordinates ATP. In terms of domain architecture, UvrD-like helicase C-terminal spans 269 to 583 (NQLYRFNNQD…SIGTMDLAKV (315 aa)). [4Fe-4S] cluster is bound by residues Cys-784, Cys-1112, Cys-1115, and Cys-1121.

This sequence belongs to the helicase family. AddB/RexB type 1 subfamily. As to quaternary structure, heterodimer of AddA and AddB. Mg(2+) is required as a cofactor. [4Fe-4S] cluster serves as cofactor.

Functionally, the heterodimer acts as both an ATP-dependent DNA helicase and an ATP-dependent, dual-direction single-stranded exonuclease. Recognizes the chi site generating a DNA molecule suitable for the initiation of homologous recombination. The AddB subunit has 5' -&gt; 3' nuclease activity but not helicase activity. The chain is ATP-dependent helicase/deoxyribonuclease subunit B from Staphylococcus aureus (strain MRSA252).